Consider the following 257-residue polypeptide: NAD-capped RNA hydrolase NudC (257 aa).

Positions 25 and 69 each coordinate substrate. Residues C98 and C101 each contribute to the Zn(2+) site. E111 lines the substrate pocket. C116 and C119 together coordinate Zn(2+). Y124 provides a ligand contact to substrate. Positions 125-248 constitute a Nudix hydrolase domain; that stretch reads PQIAPCIIVA…TVARRLIEDT (124 aa). A divalent metal cation is bound by residues A158, E174, and E178. Positions 159-180 match the Nudix box motif; the sequence is GFVEVGETLEQAVAREVMEESG. Position 192–199 (192–199) interacts with substrate; the sequence is QPWPFPQS. Residue E219 coordinates a divalent metal cation. Position 241 (A241) interacts with substrate.

Belongs to the Nudix hydrolase family. NudC subfamily. In terms of assembly, homodimer. The cofactor is Mg(2+). It depends on Mn(2+) as a cofactor. Requires Zn(2+) as cofactor.

The enzyme catalyses a 5'-end NAD(+)-phospho-ribonucleoside in mRNA + H2O = a 5'-end phospho-adenosine-phospho-ribonucleoside in mRNA + beta-nicotinamide D-ribonucleotide + 2 H(+). The catalysed reaction is NAD(+) + H2O = beta-nicotinamide D-ribonucleotide + AMP + 2 H(+). It carries out the reaction NADH + H2O = reduced beta-nicotinamide D-ribonucleotide + AMP + 2 H(+). In terms of biological role, mRNA decapping enzyme that specifically removes the nicotinamide adenine dinucleotide (NAD) cap from a subset of mRNAs by hydrolyzing the diphosphate linkage to produce nicotinamide mononucleotide (NMN) and 5' monophosphate mRNA. The NAD-cap is present at the 5'-end of some mRNAs and stabilizes RNA against 5'-processing. Has preference for mRNAs with a 5'-end purine. Catalyzes the hydrolysis of a broad range of dinucleotide pyrophosphates. This chain is NAD-capped RNA hydrolase NudC, found in Escherichia coli O127:H6 (strain E2348/69 / EPEC).